Consider the following 142-residue polypeptide: RNA polymerase-binding transcription factor DksA (142 aa).

Disordered regions lie at residues 1–20 (MQTA…EDEP), 51–70 (HLQK…SSET), and 119–142 (RPTA…HRDD). A dksA C4-type zinc finger spans residues 104–128 (CEETGEPIGLARLEARPTATMSVEA). Positions 128 to 142 (AQERHERRERVHRDD) are enriched in basic and acidic residues.

The protein belongs to the DksA family. In terms of assembly, interacts directly with the RNA polymerase.

The protein localises to the cytoplasm. Functionally, transcription factor that acts by binding directly to the RNA polymerase (RNAP). Required for negative regulation of rRNA expression and positive regulation of several amino acid biosynthesis promoters. This is RNA polymerase-binding transcription factor DksA from Caulobacter vibrioides (strain ATCC 19089 / CIP 103742 / CB 15) (Caulobacter crescentus).